A 406-amino-acid polypeptide reads, in one-letter code: Phosphoglycerate kinase (406 aa).

Substrate contacts are provided by residues 23 to 25 (DIN), Arg38, 61 to 64 (HQGR), Arg117, and Arg157. ATP-binding positions include Glu331 and 357 to 360 (GGHI).

The protein belongs to the phosphoglycerate kinase family. In terms of assembly, monomer.

It localises to the cytoplasm. The catalysed reaction is (2R)-3-phosphoglycerate + ATP = (2R)-3-phospho-glyceroyl phosphate + ADP. It functions in the pathway carbohydrate degradation; glycolysis; pyruvate from D-glyceraldehyde 3-phosphate: step 2/5. In Methanopyrus kandleri (strain AV19 / DSM 6324 / JCM 9639 / NBRC 100938), this protein is Phosphoglycerate kinase.